The sequence spans 508 residues: Probable glycine dehydrogenase (decarboxylating) subunit 2 (508 aa).

The residue at position 277 (Lys-277) is an N6-(pyridoxal phosphate)lysine.

It belongs to the GcvP family. C-terminal subunit subfamily. The glycine cleavage system is composed of four proteins: P, T, L and H. In this organism, the P 'protein' is a heterodimer of two subunits. Pyridoxal 5'-phosphate is required as a cofactor.

The catalysed reaction is N(6)-[(R)-lipoyl]-L-lysyl-[glycine-cleavage complex H protein] + glycine + H(+) = N(6)-[(R)-S(8)-aminomethyldihydrolipoyl]-L-lysyl-[glycine-cleavage complex H protein] + CO2. Functionally, the glycine cleavage system catalyzes the degradation of glycine. The P protein binds the alpha-amino group of glycine through its pyridoxal phosphate cofactor; CO(2) is released and the remaining methylamine moiety is then transferred to the lipoamide cofactor of the H protein. This is Probable glycine dehydrogenase (decarboxylating) subunit 2 from Saccharolobus solfataricus (strain ATCC 35092 / DSM 1617 / JCM 11322 / P2) (Sulfolobus solfataricus).